A 23-amino-acid polypeptide reads, in one-letter code: Cardioactive peptide CAP23 (23 aa).

A disulfide bridge links cysteine 7 with cysteine 19.

The protein belongs to the GBP/PSP1/paralytic peptide family.

Its function is as follows. Has excitatory effects on a semi-isolated heart from larval Manduca sexta, causing an inotropic effect at low concentrations of peptide and chronotropic and inotropic effects at high doses. This Spodoptera eridania (Southern armyworm) protein is Cardioactive peptide CAP23.